A 104-amino-acid chain; its full sequence is Pyrimidine/purine nucleoside phosphorylase (104 aa).

It belongs to the nucleoside phosphorylase PpnP family.

The enzyme catalyses a purine D-ribonucleoside + phosphate = a purine nucleobase + alpha-D-ribose 1-phosphate. It catalyses the reaction adenosine + phosphate = alpha-D-ribose 1-phosphate + adenine. It carries out the reaction cytidine + phosphate = cytosine + alpha-D-ribose 1-phosphate. The catalysed reaction is guanosine + phosphate = alpha-D-ribose 1-phosphate + guanine. The enzyme catalyses inosine + phosphate = alpha-D-ribose 1-phosphate + hypoxanthine. It catalyses the reaction thymidine + phosphate = 2-deoxy-alpha-D-ribose 1-phosphate + thymine. It carries out the reaction uridine + phosphate = alpha-D-ribose 1-phosphate + uracil. The catalysed reaction is xanthosine + phosphate = alpha-D-ribose 1-phosphate + xanthine. Catalyzes the phosphorolysis of diverse nucleosides, yielding D-ribose 1-phosphate and the respective free bases. Can use uridine, adenosine, guanosine, cytidine, thymidine, inosine and xanthosine as substrates. Also catalyzes the reverse reactions. The sequence is that of Pyrimidine/purine nucleoside phosphorylase from Leptospira borgpetersenii serovar Hardjo-bovis (strain L550).